A 129-amino-acid polypeptide reads, in one-letter code: Small ribosomal subunit protein uS11 (129 aa).

Belongs to the universal ribosomal protein uS11 family. In terms of assembly, part of the 30S ribosomal subunit. Interacts with proteins S7 and S18. Binds to IF-3.

Functionally, located on the platform of the 30S subunit, it bridges several disparate RNA helices of the 16S rRNA. Forms part of the Shine-Dalgarno cleft in the 70S ribosome. The sequence is that of Small ribosomal subunit protein uS11 from Macrococcus caseolyticus (strain JCSC5402) (Macrococcoides caseolyticum).